We begin with the raw amino-acid sequence, 561 residues long: Acyl-CoA ligase ppsA (561 aa).

N-linked (GlcNAc...) asparagine glycosylation occurs at N21. Residues 71–91 (SILYPALFLAIVGVGAVYMGA) traverse the membrane as a helical segment. Position 203–214 (203–214 (MFATSGTSGLPK)) interacts with AMP. The N-linked (GlcNAc...) asparagine glycan is linked to N396. Positions 462 to 540 (ELEAELAQHP…DSIPRNSGGK (79 aa)) are AMP-binding.

Belongs to the ATP-dependent AMP-binding enzyme family.

The protein resides in the membrane. The enzyme catalyses acetate + ATP + CoA = acetyl-CoA + ADP + phosphate. The catalysed reaction is propanoate + ATP + CoA = propanoyl-CoA + AMP + diphosphate. It participates in secondary metabolite biosynthesis. Its function is as follows. Acyl-CoA ligase; part of the gene cluster that mediates the biosynthesis of 2,4'-dihydroxy-3'-methoxypropiophenone. The first step of the pathway is the conversion of acetate into acetyl-CoA by the acyl-CoA ligase ppsA. Acetyl-CoA is then used as a starter unit by the polyketide synthase ppsB and condensed with 4 malonyl-CoA unit to produce the pentaketide backbone. During polyketide extension, the polykedite chain is probably reduced and dehydrated by the KR and PT domains, respectively. O-methylation seems to be catalyzed by an unknown methyltransferase rather than by the CMeT domain of ppsB. Two hydroxylations and one further decarboxylation step catalyzed by yet unknown enzymes are then required to yield 4'-hydroxy-3'-methoxypropiophenone. PpsC functions as a carrier protein to transport 4'-hydroxy-3'-methoxypropiophenone to a specific cell compartment in which 4'-hydroxy-3'-methoxypropiophenone is hydroxylated to 2,4'-dihydroxy-3'-methoxypropiophenone by a still to be identified enzyme. The sequence is that of Acyl-CoA ligase ppsA from Aspergillus oryzae (strain ATCC 42149 / RIB 40) (Yellow koji mold).